A 195-amino-acid chain; its full sequence is Pyruvoyl-dependent arginine decarboxylase AaxB (195 aa).

Position 53 is a pyruvic acid (Ser) (S53).

Belongs to the pyruvoyl-dependent arginine decarboxylase family. As to quaternary structure, trimer of an alpha-beta dimer. Pyruvate serves as cofactor.

The protein localises to the cytoplasm. It carries out the reaction L-arginine + H(+) = agmatine + CO2. Part of the AaxABC system, catalyzes the decarboxylation of L-arginine. The arginine uptake by the bacterium in the macrophage may be a virulence factor against the host innate immune response. The sequence is that of Pyruvoyl-dependent arginine decarboxylase AaxB (aaxB) from Chlamydia trachomatis serovar L2 (strain ATCC VR-902B / DSM 19102 / 434/Bu).